Here is a 420-residue protein sequence, read N- to C-terminus: Exodeoxyribonuclease 7 large subunit (420 aa).

Belongs to the XseA family. In terms of assembly, heterooligomer composed of large and small subunits.

Its subcellular location is the cytoplasm. It carries out the reaction Exonucleolytic cleavage in either 5'- to 3'- or 3'- to 5'-direction to yield nucleoside 5'-phosphates.. Functionally, bidirectionally degrades single-stranded DNA into large acid-insoluble oligonucleotides, which are then degraded further into small acid-soluble oligonucleotides. This Helicobacter pylori (strain P12) protein is Exodeoxyribonuclease 7 large subunit.